The sequence spans 181 residues: Adenylyl-sulfate kinase (181 aa).

Gly-13–Ser-20 is a binding site for ATP. The active-site Phosphoserine intermediate is Ser-87.

The protein belongs to the APS kinase family.

The enzyme catalyses adenosine 5'-phosphosulfate + ATP = 3'-phosphoadenylyl sulfate + ADP + H(+). The protein operates within sulfur metabolism; hydrogen sulfide biosynthesis; sulfite from sulfate: step 2/3. Functionally, catalyzes the synthesis of activated sulfate. This is Adenylyl-sulfate kinase from Burkholderia ambifaria (strain ATCC BAA-244 / DSM 16087 / CCUG 44356 / LMG 19182 / AMMD) (Burkholderia cepacia (strain AMMD)).